The chain runs to 238 residues: Cadherin-2 (238 aa).

Cadherin domains lie at 1–46 (TKPL…RPEF), 47–161 (LHQV…PPEF), and 162–238 (TAMT…RMFV). Residues 1–238 (TKPLDRELIA…IDFETNRMFV (238 aa)) lie on the Extracellular side of the membrane. Asp-5, Glu-7, Asp-38, Met-39, Asn-40, Asp-41, and Asn-42 together coordinate Ca(2+). A glycan (N-linked (GlcNAc...) asparagine) is linked at Asn-52. Residues Asp-72, Asp-74, and Asn-80 each coordinate Ca(2+). An N-linked (GlcNAc...) asparagine glycan is attached at Asn-104. Residue Asp-132 coordinates Ca(2+). A glycan (N-linked (GlcNAc...) asparagine) is linked at Asn-181.

In terms of assembly, homodimer (via extracellular region). Can also form heterodimers with other cadherins (via extracellular region). Dimerization occurs in trans, i.e. with a cadherin chain from another cell. Interacts with CDCP1. Interacts with PCDH8; this complex may also include TAOK2. The interaction with PCDH8 may lead to internalization through TAOK2/p38 MAPK pathway. Identified in a complex containing FGFR4, NCAM1, CDH2, PLCG1, FRS2, SRC, SHC1, GAP43 and CTTN. May interact with OBSCN (via protein kinase domain 2). Post-translationally, cleaved by MMP24. Ectodomain cleavage leads to the generation of a soluble 90 kDa N-terminal soluble fragment and a 45 kDa membrane-bound C-terminal fragment 1 (CTF1), which is further cleaved by gamma-secretase into a 35 kDa. Cleavage in neural stem cells by MMP24 affects CDH2-mediated anchorage of neural stem cells to ependymocytes in the adult subependymal zone, leading to modulate neural stem cell quiescence. May be phosphorylated by OBSCN.

The protein localises to the cell membrane. Its subcellular location is the sarcolemma. It localises to the cell junction. The protein resides in the cell surface. It is found in the desmosome. The protein localises to the adherens junction. Calcium-dependent cell adhesion protein; preferentially mediates homotypic cell-cell adhesion by dimerization with a CDH2 chain from another cell. Cadherins may thus contribute to the sorting of heterogeneous cell types. Acts as a regulator of neural stem cells quiescence by mediating anchorage of neural stem cells to ependymocytes in the adult subependymal zone: upon cleavage by MMP24, CDH2-mediated anchorage is affected, leading to modulate neural stem cell quiescence. Plays a role in cell-to-cell junction formation between pancreatic beta cells and neural crest stem (NCS) cells, promoting the formation of processes by NCS cells. Required for proper neurite branching. Required for pre- and postsynaptic organization. CDH2 may be involved in neuronal recognition mechanism. In hippocampal neurons, may regulate dendritic spine density. This chain is Cadherin-2 (CDH2), found in Cricetulus griseus (Chinese hamster).